Reading from the N-terminus, the 486-residue chain is Virulence sensor protein PhoQ (486 aa).

Over 1–16 (MKKLLRLFFPLSLRVR) the chain is Cytoplasmic. The helical transmembrane segment at 17 to 37 (FLLATAAVVLVLSLAYGMVAL) threads the bilayer. Residues 38-194 (IGYSVSFDKT…LKSSYMVWSW (157 aa)) are Periplasmic-facing. The a divalent metal cation site is built by D151 and D152. The chain crosses the membrane as a helical span at residues 195–215 (FIYVLSANLLLVIPLLWVAAW). The HAMP domain maps to 215–266 (WWSLRPIEALAKEVRELEEHNRELLNPATTRELTSLVRNLNRLLKSERERYD). Topologically, residues 216-486 (WSLRPIEALA…GRQHSAPKDE (271 aa)) are cytoplasmic. Residues 274–480 (DLTHSLKTPL…RMEVIFGRQH (207 aa)) form the Histidine kinase domain. Phosphohistidine; by autocatalysis is present on H277. N385 contacts Mg(2+). ATP is bound by residues 385–393 (NVLDNACKY), 415–420 (DDGPGI), and 434–446 (RVDT…GVGL). A Mg(2+)-binding site is contributed by Q442.

In terms of assembly, homodimer.

The protein localises to the cell inner membrane. It carries out the reaction ATP + protein L-histidine = ADP + protein N-phospho-L-histidine.. In terms of biological role, member of the two-component regulatory system PhoP/PhoQ involved in virulence and adaptation to low Mg(2+) environments. In low periplasmic Mg(2+), PhoQ functions as a membrane-associated protein kinase that undergoes autophosphorylation and subsequently transfers the phosphate to PhoP, which results in the expression of PhoP-activated genes (PAG) and repression of PhoP-repressed genes (PRG). In high periplasmic Mg(2+), acts as a protein phosphatase that dephosphorylates phospho-PhoP, which results in the repression of PAG and may lead to expression of some PRG. Necessary for resistance to killing by polymorphonuclear leukocytes (PMNs) and cationic antimicrobial peptides (CAMP) they produce. In Shigella flexneri, this protein is Virulence sensor protein PhoQ (phoQ).